Here is a 440-residue protein sequence, read N- to C-terminus: Serine hydroxymethyltransferase (440 aa).

Gly-123–Ile-125 lines the (6S)-5,6,7,8-tetrahydrofolate pocket. Position 238 is an N6-(pyridoxal phosphate)lysine (Lys-238).

Belongs to the SHMT family. In terms of assembly, homodimer. Pyridoxal 5'-phosphate is required as a cofactor.

It is found in the cytoplasm. It participates in amino-acid biosynthesis; glycine biosynthesis; glycine from L-serine: step 1/1. Catalyzes the reversible interconversion of serine and glycine with a modified folate serving as the one-carbon carrier. Also exhibits a pteridine-independent aldolase activity toward beta-hydroxyamino acids, producing glycine and aldehydes, via a retro-aldol mechanism. The chain is Serine hydroxymethyltransferase from Nitrosopumilus maritimus (strain SCM1).